The sequence spans 584 residues: Aspartate--tRNA(Asp/Asn) ligase (584 aa).

Position 177 (glutamate 177) interacts with L-aspartate. An aspartate region spans residues 201–204 (QLFK). Arginine 223 contacts L-aspartate. ATP-binding positions include 223-225 (RDE) and glutamine 232. Histidine 447 provides a ligand contact to L-aspartate. Position 481 (glutamate 481) interacts with ATP. Residue arginine 488 coordinates L-aspartate. Residue 533 to 536 (GLDR) participates in ATP binding.

This sequence belongs to the class-II aminoacyl-tRNA synthetase family. Type 1 subfamily. In terms of assembly, homodimer.

The protein resides in the cytoplasm. The catalysed reaction is tRNA(Asx) + L-aspartate + ATP = L-aspartyl-tRNA(Asx) + AMP + diphosphate. Aspartyl-tRNA synthetase with relaxed tRNA specificity since it is able to aspartylate not only its cognate tRNA(Asp) but also tRNA(Asn). Reaction proceeds in two steps: L-aspartate is first activated by ATP to form Asp-AMP and then transferred to the acceptor end of tRNA(Asp/Asn). This Chlamydia abortus (strain DSM 27085 / S26/3) (Chlamydophila abortus) protein is Aspartate--tRNA(Asp/Asn) ligase.